The primary structure comprises 445 residues: Proline--tRNA ligase (445 aa).

This sequence belongs to the class-II aminoacyl-tRNA synthetase family. ProS type 2 subfamily. As to quaternary structure, homodimer.

The protein resides in the cytoplasm. It catalyses the reaction tRNA(Pro) + L-proline + ATP = L-prolyl-tRNA(Pro) + AMP + diphosphate. Its function is as follows. Catalyzes the attachment of proline to tRNA(Pro) in a two-step reaction: proline is first activated by ATP to form Pro-AMP and then transferred to the acceptor end of tRNA(Pro). This chain is Proline--tRNA ligase, found in Caulobacter sp. (strain K31).